Reading from the N-terminus, the 129-residue chain is MSSAPLLQRTPGKKIALPTRVEPKVFFANERTFLSWLNFTVMLGGLGVGLLNFGDKIGRVSAGLFTFVAMGTMIYALVTYHWRAAAIRRRGSGPYDDRLGPTLLCFFLLVAVIINFILRLKYNDANTKL.

An N-acetylserine modification is found at serine 2. Topologically, residues 2-32 are cytoplasmic; sequence SSAPLLQRTPGKKIALPTRVEPKVFFANERT. The chain crosses the membrane as a helical span at residues 33–53; that stretch reads FLSWLNFTVMLGGLGVGLLNF. Residues 54–59 lie on the Vacuolar side of the membrane; that stretch reads GDKIGR. A helical membrane pass occupies residues 60–80; it reads VSAGLFTFVAMGTMIYALVTY. Residues 81–98 lie on the Cytoplasmic side of the membrane; sequence HWRAAAIRRRGSGPYDDR. The chain crosses the membrane as a helical span at residues 99 to 119; sequence LGPTLLCFFLLVAVIINFILR. Over 120–129 the chain is Vacuolar; the sequence is LKYNDANTKL.

The protein belongs to the VTC1 family. The VTC core complex is an integral membrane heterooligomer composed of the catalytic subunit VTC4 and the accessory subunits VTC1, VTC2 and VTC3. The complex exists in 2 different sub-complexes: VTC1-VTC2-VCT4 and VCT1-VTC3-VTC4. The VCT1-VTC3-VTC4 subcomplex is mostly found on the vacuolar membrane. The VTC1-VTC2-VCT4 subcomplex is observed in the cell periphery, probably ER and nuclear envelope, but localizes to the vacuole under phosphate starvation. Each subunit contains 3 transmembrane helices. VTC1 is a small membrane protein without hydrophilic domain. VTC2, VTC3 and VTC4 are related and have 2 hydrophilic domains that face the cytosol, an N-terminal SPX domain and the central core domain. The central core in VTC4 is the catalytic domain, with the essential catalytic lysine replaced by isoleucine and leucine in VTC2 and VTC3, respectively. The core complex associates with the accessory subunit VTC5. The complex interacts with the v-SNARE NYV1 and with the V(0) subunit of V-ATPase VPH1.

The protein localises to the vacuole membrane. It is found in the cytoplasm. It localises to the cell cortex. The protein resides in the endoplasmic reticulum membrane. Its subcellular location is the cytoplasmic vesicle. The protein localises to the autophagosome membrane. Its function is as follows. Accessory subunit of the vacuolar transporter chaperone (VTC) complex. The VTC complex acts as a vacuolar polyphosphate polymerase that catalyzes the synthesis of inorganic polyphosphate (polyP) via transfer of phosphate from ATP to a growing polyP chain, releasing ADP. VTC exposes its catalytic domain VTC4 to the cytosol, where the growing polyP chain winds through a tunnel-shaped pocket, integrating cytoplasmic polymer synthesis with polyP membrane translocation. The VTC complex carries 9 vacuolar transmembrane domains, which are likely to constitute the translocation channel into the organelle lumen. PolyP synthesis is tightly coupled to its transport into the vacuole lumen, in order to avoid otherwise toxic intermediates in the cytosol, and it depends on the proton gradient across the membrane, formed by V-ATPase. VTC1 contributes only 3 transmembrane domains to the complex. The VTC complex also plays a role in vacuolar membrane fusion. Required for SEC18/NSF activity in SNARE priming, membrane binding of LMA1 and V(0) trans-complex formation. In Saccharomyces cerevisiae (strain ATCC 204508 / S288c) (Baker's yeast), this protein is Vacuolar transporter chaperone complex subunit 1.